The following is a 153-amino-acid chain: ATP synthase subunit b' (153 aa).

A helical membrane pass occupies residues 20 to 40 (TLPLMAAQVVLLTFILNALFF).

Belongs to the ATPase B chain family. F-type ATPases have 2 components, F(1) - the catalytic core - and F(0) - the membrane proton channel. F(1) has five subunits: alpha(3), beta(3), gamma(1), delta(1), epsilon(1). F(0) has four main subunits: a(1), b(1), b'(1) and c(10-14). The alpha and beta chains form an alternating ring which encloses part of the gamma chain. F(1) is attached to F(0) by a central stalk formed by the gamma and epsilon chains, while a peripheral stalk is formed by the delta, b and b' chains.

The protein resides in the cellular thylakoid membrane. Its function is as follows. F(1)F(0) ATP synthase produces ATP from ADP in the presence of a proton or sodium gradient. F-type ATPases consist of two structural domains, F(1) containing the extramembraneous catalytic core and F(0) containing the membrane proton channel, linked together by a central stalk and a peripheral stalk. During catalysis, ATP synthesis in the catalytic domain of F(1) is coupled via a rotary mechanism of the central stalk subunits to proton translocation. In terms of biological role, component of the F(0) channel, it forms part of the peripheral stalk, linking F(1) to F(0). The b'-subunit is a diverged and duplicated form of b found in plants and photosynthetic bacteria. This is ATP synthase subunit b' from Prochlorococcus marinus (strain SARG / CCMP1375 / SS120).